The sequence spans 138 residues: Sec-independent protein translocase protein TatB (138 aa).

Residues 2–18 (SFGEIIVILVVAILVLG) form a helical membrane-spanning segment. The tract at residues 109–138 (NNLSGQNLNTEEKPNLSKLETQDKNGKINV) is disordered. Basic and acidic residues predominate over residues 118–138 (TEEKPNLSKLETQDKNGKINV).

Belongs to the TatB family. In terms of assembly, the Tat system comprises two distinct complexes: a TatABC complex, containing multiple copies of TatA, TatB and TatC subunits, and a separate TatA complex, containing only TatA subunits. Substrates initially bind to the TatABC complex, which probably triggers association of the separate TatA complex to form the active translocon.

It localises to the cell inner membrane. Its function is as follows. Part of the twin-arginine translocation (Tat) system that transports large folded proteins containing a characteristic twin-arginine motif in their signal peptide across membranes. Together with TatC, TatB is part of a receptor directly interacting with Tat signal peptides. TatB may form an oligomeric binding site that transiently accommodates folded Tat precursor proteins before their translocation. In Campylobacter jejuni subsp. jejuni serotype O:2 (strain ATCC 700819 / NCTC 11168), this protein is Sec-independent protein translocase protein TatB.